Reading from the N-terminus, the 473-residue chain is Photosystem II CP43 reaction center protein (473 aa).

A propeptide spanning residues 1–14 is cleaved from the precursor; it reads MKILYSPRRFYPVE. Thr15 bears the N-acetylthreonine mark. Phosphothreonine is present on Thr15. Helical transmembrane passes span 69–93, 134–155, 178–200, 255–275, and 291–312; these read LFEV…PHLA, LIGP…KDKN, KALY…REIT, KPFA…LSYS, and WFNN…ASQA. Glu367 serves as a coordination point for [CaMn4O5] cluster. The helical transmembrane segment at 447–471 threads the bilayer; that stretch reads RARAAAAGFEKGIDRDTEPVLSMTP.

This sequence belongs to the PsbB/PsbC family. PsbC subfamily. As to quaternary structure, PSII is composed of 1 copy each of membrane proteins PsbA, PsbB, PsbC, PsbD, PsbE, PsbF, PsbH, PsbI, PsbJ, PsbK, PsbL, PsbM, PsbT, PsbX, PsbY, PsbZ, Psb30/Ycf12, at least 3 peripheral proteins of the oxygen-evolving complex and a large number of cofactors. It forms dimeric complexes. Binds multiple chlorophylls and provides some of the ligands for the Ca-4Mn-5O cluster of the oxygen-evolving complex. It may also provide a ligand for a Cl- that is required for oxygen evolution. PSII binds additional chlorophylls, carotenoids and specific lipids. is required as a cofactor.

The protein resides in the plastid. The protein localises to the chloroplast thylakoid membrane. One of the components of the core complex of photosystem II (PSII). It binds chlorophyll and helps catalyze the primary light-induced photochemical processes of PSII. PSII is a light-driven water:plastoquinone oxidoreductase, using light energy to abstract electrons from H(2)O, generating O(2) and a proton gradient subsequently used for ATP formation. The chain is Photosystem II CP43 reaction center protein from Adiantum capillus-veneris (Maidenhair fern).